The following is a 1441-amino-acid chain: Probable ubiquitin-conjugating enzyme E2 R521 (1441 aa).

Residues 20–40 form a helical membrane-spanning segment; the sequence is YIHHIIINYITNSILYFFLIM. The stretch at 63–89 forms a coiled coil; it reads NQSKLVNTLDIIKDEINKWEEKNTDKD. A compositionally biased stretch (basic and acidic residues) spans 180 to 199; sequence VSKDKMKDKSESNSEHEQES. 2 disordered regions span residues 180–207 and 283–305; these read VSKDKMKDKSESNSEHEQESKSVVSNEI and IFGKSKNSGPSSSKTSISSMSKV. Low complexity predominate over residues 286–303; it reads KSKNSGPSSSKTSISSMS. A coiled-coil region spans residues 340–368; that stretch reads TTNEDNNDLDNLINEVERLVQETKDQETK. Low complexity predominate over residues 505–538; the sequence is TVEPVQEVAEEPVQQEVAEEPVQQEVAEEPVQQE. Disordered regions lie at residues 505–554 and 577–605; these read TVEP…PVQK and NDFSDHSDSPEPSDSSDSEEEITNSNNLG. The segment covering 539-549 has biased composition (acidic residues); sequence VAEEPVQEVAE. Positions 1217 to 1380 constitute a UBC core domain; the sequence is AISRELLSHS…VRFNCMKWAM (164 aa). Residue Cys-1306 is the Glycyl thioester intermediate of the active site.

It belongs to the ubiquitin-conjugating enzyme family.

It localises to the membrane. It catalyses the reaction S-ubiquitinyl-[E1 ubiquitin-activating enzyme]-L-cysteine + [E2 ubiquitin-conjugating enzyme]-L-cysteine = [E1 ubiquitin-activating enzyme]-L-cysteine + S-ubiquitinyl-[E2 ubiquitin-conjugating enzyme]-L-cysteine.. It functions in the pathway protein modification; protein ubiquitination. Functionally, catalyzes the covalent attachment of ubiquitin to other proteins. This chain is Probable ubiquitin-conjugating enzyme E2 R521, found in Acanthamoeba polyphaga (Amoeba).